Reading from the N-terminus, the 55-residue chain is Mitochondrial import receptor subunit TOM7 homolog (55 aa).

Topologically, residues Met1–Gln20 are cytoplasmic. A helical transmembrane segment spans residues Phe21–Phe36. Residues Lys37 to Gly55 lie on the Mitochondrial intermembrane side of the membrane.

Belongs to the Tom7 family. As to quaternary structure, forms part of the preprotein translocase complex of the outer mitochondrial membrane (TOM complex) which consists of at least 7 different proteins (TOMM5, TOMM6, TOMM7, TOMM20, TOMM22, TOMM40 and TOMM70).

The protein resides in the mitochondrion outer membrane. Required for assembly and stability of the TOM complex. Positive regulator of PRKN translocation to damaged mitochondria. Acts probably by stabilizing PINK1 on the outer membrane of depolarized mitochondria. The sequence is that of Mitochondrial import receptor subunit TOM7 homolog (TOMM7) from Homo sapiens (Human).